The primary structure comprises 511 residues: UDP-N-acetylmuramoyl-L-alanyl-D-glutamate--2,6-diaminopimelate ligase (511 aa).

Serine 33 contributes to the UDP-N-acetyl-alpha-D-muramoyl-L-alanyl-D-glutamate binding site. ATP is bound at residue 118-124 (GTNGKTT). UDP-N-acetyl-alpha-D-muramoyl-L-alanyl-D-glutamate-binding positions include 160 to 161 (TT), serine 187, glutamine 193, and arginine 195. The residue at position 227 (lysine 227) is an N6-carboxylysine. Meso-2,6-diaminopimelate is bound by residues arginine 403, 427 to 430 (DNPR), glycine 478, and glutamate 482. The Meso-diaminopimelate recognition motif signature appears at 427 to 430 (DNPR).

Belongs to the MurCDEF family. MurE subfamily. Mg(2+) serves as cofactor. Carboxylation is probably crucial for Mg(2+) binding and, consequently, for the gamma-phosphate positioning of ATP.

Its subcellular location is the cytoplasm. The enzyme catalyses UDP-N-acetyl-alpha-D-muramoyl-L-alanyl-D-glutamate + meso-2,6-diaminopimelate + ATP = UDP-N-acetyl-alpha-D-muramoyl-L-alanyl-gamma-D-glutamyl-meso-2,6-diaminopimelate + ADP + phosphate + H(+). It participates in cell wall biogenesis; peptidoglycan biosynthesis. Functionally, catalyzes the addition of meso-diaminopimelic acid to the nucleotide precursor UDP-N-acetylmuramoyl-L-alanyl-D-glutamate (UMAG) in the biosynthesis of bacterial cell-wall peptidoglycan. In Prochlorococcus marinus subsp. pastoris (strain CCMP1986 / NIES-2087 / MED4), this protein is UDP-N-acetylmuramoyl-L-alanyl-D-glutamate--2,6-diaminopimelate ligase.